We begin with the raw amino-acid sequence, 370 residues long: 3-dehydroquinate synthase (370 aa).

NAD(+)-binding positions include 107 to 111 (GVIGD), 131 to 132 (TS), lysine 144, and lysine 153. Residues glutamate 186, histidine 249, and histidine 267 each contribute to the Zn(2+) site.

It belongs to the sugar phosphate cyclases superfamily. Dehydroquinate synthase family. Co(2+) is required as a cofactor. Requires Zn(2+) as cofactor. NAD(+) serves as cofactor.

The protein localises to the cytoplasm. It carries out the reaction 7-phospho-2-dehydro-3-deoxy-D-arabino-heptonate = 3-dehydroquinate + phosphate. The protein operates within metabolic intermediate biosynthesis; chorismate biosynthesis; chorismate from D-erythrose 4-phosphate and phosphoenolpyruvate: step 2/7. Catalyzes the conversion of 3-deoxy-D-arabino-heptulosonate 7-phosphate (DAHP) to dehydroquinate (DHQ). In Jannaschia sp. (strain CCS1), this protein is 3-dehydroquinate synthase.